The sequence spans 184 residues: Holliday junction branch migration complex subunit RuvA (184 aa).

Residues 1–62 are domain I; the sequence is MIVGLVGEVL…EDSESLYGFV (62 aa). Positions 63-134 are domain II; sequence DINEKKMFDR…ELGEFDISES (72 aa). A flexible linker region spans residues 134 to 135; it reads SN. Residues 136 to 184 are domain III; the sequence is VTSSAFQEASMALQSLGFKKEQIQKALQECTATDTASLVKEALKKIQKL.

This sequence belongs to the RuvA family. Homotetramer. Forms an RuvA(8)-RuvB(12)-Holliday junction (HJ) complex. HJ DNA is sandwiched between 2 RuvA tetramers; dsDNA enters through RuvA and exits via RuvB. An RuvB hexamer assembles on each DNA strand where it exits the tetramer. Each RuvB hexamer is contacted by two RuvA subunits (via domain III) on 2 adjacent RuvB subunits; this complex drives branch migration. In the full resolvosome a probable DNA-RuvA(4)-RuvB(12)-RuvC(2) complex forms which resolves the HJ.

The protein localises to the cytoplasm. Functionally, the RuvA-RuvB-RuvC complex processes Holliday junction (HJ) DNA during genetic recombination and DNA repair, while the RuvA-RuvB complex plays an important role in the rescue of blocked DNA replication forks via replication fork reversal (RFR). RuvA specifically binds to HJ cruciform DNA, conferring on it an open structure. The RuvB hexamer acts as an ATP-dependent pump, pulling dsDNA into and through the RuvAB complex. HJ branch migration allows RuvC to scan DNA until it finds its consensus sequence, where it cleaves and resolves the cruciform DNA. The sequence is that of Holliday junction branch migration complex subunit RuvA from Nitratiruptor sp. (strain SB155-2).